A 235-amino-acid polypeptide reads, in one-letter code: Sugar fermentation stimulation protein homolog (235 aa).

It belongs to the SfsA family.

In Allorhizobium ampelinum (strain ATCC BAA-846 / DSM 112012 / S4) (Agrobacterium vitis (strain S4)), this protein is Sugar fermentation stimulation protein homolog.